Reading from the N-terminus, the 477-residue chain is Ribulose bisphosphate carboxylase large chain (477 aa).

A propeptide spanning residues 1–2 (MS) is cleaved from the precursor. The residue at position 3 (P3) is an N-acetylproline. K14 carries the N6,N6,N6-trimethyllysine modification. N123 and T173 together coordinate substrate. K175 (proton acceptor) is an active-site residue. Residue K177 coordinates substrate. Mg(2+) is bound by residues K201, D203, and E204. K201 bears the N6-carboxylysine mark. The Proton acceptor role is filled by H294. Residues R295, H327, and S379 each coordinate substrate.

This sequence belongs to the RuBisCO large chain family. Type I subfamily. As to quaternary structure, heterohexadecamer of 8 large chains and 8 small chains; disulfide-linked. The disulfide link is formed within the large subunit homodimers. Mg(2+) serves as cofactor. In terms of processing, the disulfide bond which can form in the large chain dimeric partners within the hexadecamer appears to be associated with oxidative stress and protein turnover.

Its subcellular location is the plastid. It is found in the chloroplast. The enzyme catalyses 2 (2R)-3-phosphoglycerate + 2 H(+) = D-ribulose 1,5-bisphosphate + CO2 + H2O. The catalysed reaction is D-ribulose 1,5-bisphosphate + O2 = 2-phosphoglycolate + (2R)-3-phosphoglycerate + 2 H(+). Functionally, ruBisCO catalyzes two reactions: the carboxylation of D-ribulose 1,5-bisphosphate, the primary event in carbon dioxide fixation, as well as the oxidative fragmentation of the pentose substrate in the photorespiration process. Both reactions occur simultaneously and in competition at the same active site. The chain is Ribulose bisphosphate carboxylase large chain (rbcL) from Solanum tuberosum (Potato).